The chain runs to 245 residues: 2-C-methyl-D-erythritol 4-phosphate cytidylyltransferase (245 aa).

The protein belongs to the IspD/TarI cytidylyltransferase family. IspD subfamily.

The enzyme catalyses 2-C-methyl-D-erythritol 4-phosphate + CTP + H(+) = 4-CDP-2-C-methyl-D-erythritol + diphosphate. Its pathway is isoprenoid biosynthesis; isopentenyl diphosphate biosynthesis via DXP pathway; isopentenyl diphosphate from 1-deoxy-D-xylulose 5-phosphate: step 2/6. In terms of biological role, catalyzes the formation of 4-diphosphocytidyl-2-C-methyl-D-erythritol from CTP and 2-C-methyl-D-erythritol 4-phosphate (MEP). The polypeptide is 2-C-methyl-D-erythritol 4-phosphate cytidylyltransferase (Chloroherpeton thalassium (strain ATCC 35110 / GB-78)).